Reading from the N-terminus, the 267-residue chain is Centromere protein Q (267 aa).

2 stretches are compositionally biased toward basic residues: residues 1-22 (MSGK…LKQR) and 39-49 (KRNRSHAKHLS). The tract at residues 1–54 (MSGKARASRKKPQQVKRSLKQRANKEADLPENEVGNTAKRNRSHAKHLSSKVTG) is disordered. Ser49 carries the post-translational modification Phosphoserine. The stretch at 100 to 202 (IKRKEEIQCH…EEQEVKQVFH (103 aa)) forms a coiled coil.

Belongs to the CENP-Q/OKP1 family. Component of the CENPA-CAD complex, composed of CENPI, CENPK, CENPL, CENPO, CENPP, CENPQ, CENPR and CENPS. The CENPA-CAD complex interacts with the CENPA-NAC complex, at least composed of CENPA, CENPC, CENPH, CENPM, CENPN, CENPT and CENPU. Post-translationally, phosphorylation at Ser-49 is essential for CENPE recruitment to kinetochores and orderly chromosome congression.

The protein localises to the nucleus. It localises to the chromosome. The protein resides in the centromere. Functionally, component of the CENPA-CAD (nucleosome distal) complex, a complex recruited to centromeres which is involved in assembly of kinetochore proteins, mitotic progression and chromosome segregation. May be involved in incorporation of newly synthesized CENPA into centromeres via its interaction with the CENPA-NAC complex. Plays an important role in chromosome congression and in the recruitment of CENP-O complex (which comprises CENPO, CENPP, CENPQ and CENPU), CENPE and PLK1 to the kinetochores. The chain is Centromere protein Q (Cenpq) from Mus musculus (Mouse).